The following is a 336-amino-acid chain: Terephthalate 1,2-dioxygenase, reductase component 2 (336 aa).

Residues 3–91 (HQIHIHDSDI…DIRIHPSSFR (89 aa)) enclose the 2Fe-2S ferredoxin-type domain. Positions 37, 42, 45, and 75 each coordinate [2Fe-2S] cluster. Residues 98 to 197 (RKRFTAKVYS…ELPFGSIALK (100 aa)) enclose the FAD-binding FR-type domain.

In terms of assembly, monomer. Part of a multicomponent enzyme system composed of a reductase (TphA1I or TphA1II) and a two-subunit oxygenase component (TphA2I or TphA2II and TphA3I or TphA3II). Requires FAD as cofactor. [2Fe-2S] cluster is required as a cofactor.

It carries out the reaction terephthalate + NADH + O2 + H(+) = (3S,4R)-3,4-dihydroxycyclohexa-1,5-diene-1,4-dicarboxylate + NAD(+). Its function is as follows. Component of the terephthalate 1,2-dioxygenase multicomponent enzyme system which catalyzes the dioxygenation of terephthalate (TER/TPA) to 1,2-dihydroxy-3,5-cyclohexadiene-1,4-dicarboxylic acid (DCD). TphA1 probably reduces TphA2A3. It can also use 2,5-dicarboxypyridine (PDC) and 1,4-napthalenedicarboxylic acid (NDC) as substrates, and preferentially uses NADPH which is the physiological electron donor. The polypeptide is Terephthalate 1,2-dioxygenase, reductase component 2 (tphA1II) (Comamonas sp).